Reading from the N-terminus, the 62-residue chain is Large ribosomal subunit protein uL29 (62 aa).

It belongs to the universal ribosomal protein uL29 family.

The protein is Large ribosomal subunit protein uL29 of Acholeplasma laidlawii (strain PG-8A).